The following is a 51-amino-acid chain: MRELIRLVSSAGTGHFYTTDKNKRTKPEKIEIKKYDPVVRQHVIYKEAKIK.

This sequence belongs to the bacterial ribosomal protein bL33 family. As to quaternary structure, part of the 50S ribosomal subunit. Cross-links to the P and E site tRNAs.

This Pseudomonas aeruginosa (strain ATCC 15692 / DSM 22644 / CIP 104116 / JCM 14847 / LMG 12228 / 1C / PRS 101 / PAO1) protein is Large ribosomal subunit protein bL33.